The chain runs to 124 residues: Large ribosomal subunit protein bL12 (124 aa).

It belongs to the bacterial ribosomal protein bL12 family. As to quaternary structure, homodimer. Part of the ribosomal stalk of the 50S ribosomal subunit. Forms a multimeric L10(L12)X complex, where L10 forms an elongated spine to which 2 to 4 L12 dimers bind in a sequential fashion. Binds GTP-bound translation factors.

Functionally, forms part of the ribosomal stalk which helps the ribosome interact with GTP-bound translation factors. Is thus essential for accurate translation. The protein is Large ribosomal subunit protein bL12 of Cereibacter sphaeroides (strain ATCC 17025 / ATH 2.4.3) (Rhodobacter sphaeroides).